Reading from the N-terminus, the 1357-residue chain is DNA-directed RNA polymerase subunit beta (1357 aa).

It belongs to the RNA polymerase beta chain family. In terms of assembly, the RNAP catalytic core consists of 2 alpha, 1 beta, 1 beta' and 1 omega subunit. When a sigma factor is associated with the core the holoenzyme is formed, which can initiate transcription.

It carries out the reaction RNA(n) + a ribonucleoside 5'-triphosphate = RNA(n+1) + diphosphate. Its function is as follows. DNA-dependent RNA polymerase catalyzes the transcription of DNA into RNA using the four ribonucleoside triphosphates as substrates. The protein is DNA-directed RNA polymerase subunit beta of Nitrosospira multiformis (strain ATCC 25196 / NCIMB 11849 / C 71).